Here is a 281-residue protein sequence, read N- to C-terminus: Probable superoxide dismutase [Fe] (281 aa).

Fe cation contacts are provided by H104, H152, D236, and H240.

It belongs to the iron/manganese superoxide dismutase family. Fe cation is required as a cofactor.

It catalyses the reaction 2 superoxide + 2 H(+) = H2O2 + O2. Its function is as follows. Destroys superoxide anion radicals which are normally produced within the cells and which are toxic to biological systems. This Bacillus subtilis (strain 168) protein is Probable superoxide dismutase [Fe] (sodF).